The primary structure comprises 457 residues: Casein kinase 1-like protein 11 (457 aa).

A Protein kinase domain is found at 15–284 (FKLGRKLGSG…LRRLFRDLFI (270 aa)). ATP is bound by residues 21–29 (LGSGSFGEL) and K44. D134 serves as the catalytic Proton acceptor. Disordered stretches follow at residues 305–337 (GSSS…GQDL) and 352–442 (NVSS…EDAI). Pro residues predominate over residues 311–324 (RPTPRPALDPPGPP). 2 stretches are compositionally biased toward polar residues: residues 383–403 (NGST…SAEP) and 409–429 (SRLF…QSYE).

Belongs to the protein kinase superfamily. CK1 Ser/Thr protein kinase family. Casein kinase I subfamily. In terms of assembly, monomer. In terms of processing, autophosphorylated.

It localises to the cytoplasm. Its subcellular location is the nucleus. The enzyme catalyses L-seryl-[protein] + ATP = O-phospho-L-seryl-[protein] + ADP + H(+). It catalyses the reaction L-threonyl-[protein] + ATP = O-phospho-L-threonyl-[protein] + ADP + H(+). Partially inhibited by N-(2-aminoethyl)-5-chloroisoquinoline-8-sulfonamide (CKI-7). Casein kinases are operationally defined by their preferential utilization of acidic proteins such as caseins as substrates. Can phosphorylate casein, phosvitin, myosin light chains and poly(Glu,Tyr) in vitro. The polypeptide is Casein kinase 1-like protein 11 (Arabidopsis thaliana (Mouse-ear cress)).